Reading from the N-terminus, the 470-residue chain is Aspartate-semialdehyde dehydrogenase 1 (470 aa).

2 residues coordinate NAD(+): Thr145 and Lys171. Asp243 is a catalytic residue. Gly245 contributes to the NAD(+) binding site. The active site involves Cys277. An NAD(+)-binding site is contributed by Glu371.

Belongs to the aldehyde dehydrogenase family.

The enzyme catalyses L-aspartate 4-semialdehyde + NAD(+) + H2O = L-aspartate + NADH + 2 H(+). Its function is as follows. Dehydrogenase involved in the degradation of canavanine, the delta-oxa-analog of arginine, allowing growth on canavanine as sole nitrogen and carbon source. Probably catalyzes the NAD(+)-dependent oxidation of L-aspartate-semialdehyde to L-aspartate. The protein is Aspartate-semialdehyde dehydrogenase 1 of Pseudomonas canavaninivorans.